The primary structure comprises 163 residues: Nucleotide-binding protein BPUM_1028 (163 aa).

It belongs to the YajQ family.

Functionally, nucleotide-binding protein. The polypeptide is Nucleotide-binding protein BPUM_1028 (Bacillus pumilus (strain SAFR-032)).